The sequence spans 177 residues: Ribosome maturation factor RimM (177 aa).

In terms of domain architecture, PRC barrel spans 92-166 (EDTFYHADLM…RIVVVPDTNP (75 aa)).

This sequence belongs to the RimM family. In terms of assembly, binds ribosomal protein uS19.

It is found in the cytoplasm. In terms of biological role, an accessory protein needed during the final step in the assembly of 30S ribosomal subunit, possibly for assembly of the head region. Essential for efficient processing of 16S rRNA. May be needed both before and after RbfA during the maturation of 16S rRNA. It has affinity for free ribosomal 30S subunits but not for 70S ribosomes. The sequence is that of Ribosome maturation factor RimM from Azorhizobium caulinodans (strain ATCC 43989 / DSM 5975 / JCM 20966 / LMG 6465 / NBRC 14845 / NCIMB 13405 / ORS 571).